The sequence spans 226 residues: GTP-binding nuclear protein Ran (226 aa).

Residues aspartate 3–aspartate 184 form the Small GTPase Ran-type domain. Aspartate 14–threonine 21 contacts GTP. The tract at residues lysine 33–valine 41 is switch-I. Residues glycine 70, asparagine 135 to aspartate 138, and serine 163 to lysine 165 contribute to the GTP site. Residues glycine 70–aspartate 86 form a switch-II region.

This sequence belongs to the small GTPase superfamily. Ran family. Found in a nuclear export complex with RanGTP, exportin and pre-miRNA.

Its subcellular location is the nucleus. GTP-binding protein involved in nucleocytoplasmic transport. Required for the import of protein into the nucleus and also for RNA export. Involved in chromatin condensation and control of cell cycle. In Giardia intestinalis (Giardia lamblia), this protein is GTP-binding nuclear protein Ran.